Reading from the N-terminus, the 295-residue chain is MTKQIQKTVSVCIIGRPNSGKSTLLNRIIGEKLSIVTPKVQTTRSIITGIITLKDTQVILYDTPGIFEPKGTLEKAMVRCAWSSLHSADLVMLIIDSLKPFDDVTHNILDKLCSLNIVPVFLLNKIEIESKYLNNLKAFLTENHPDSLLFPISALSGKNIDRLLEYITSKAKIAPWLYAEDDITDLPMRFIAAEITREQLFLNLQQELPYKLTVQTEKWEELKDKSVKINQVIVVARESYKTIILGKNGSKIKEIGAKSRMQMEQFFSCPIHLFLFVKVRELWENNQEFYQYMKI.

One can recognise an Era-type G domain in the interval 7–176 (KTVSVCIIGR…ITSKAKIAPW (170 aa)). Positions 15-22 (GRPNSGKS) are G1. 15–22 (GRPNSGKS) is a GTP binding site. The tract at residues 41 to 45 (QTTRS) is G2. The G3 stretch occupies residues 62 to 65 (DTPG). GTP contacts are provided by residues 62–66 (DTPGI) and 124–127 (NKIE). Positions 124 to 127 (NKIE) are G4. A G5 region spans residues 152-154 (ISA). One can recognise a KH type-2 domain in the interval 204–281 (LQQELPYKLT…HLFLFVKVRE (78 aa)).

It belongs to the TRAFAC class TrmE-Era-EngA-EngB-Septin-like GTPase superfamily. Era GTPase family. As to quaternary structure, monomer.

It localises to the cytoplasm. Its subcellular location is the cell inner membrane. Functionally, an essential GTPase that binds both GDP and GTP, with rapid nucleotide exchange. Plays a role in 16S rRNA processing and 30S ribosomal subunit biogenesis and possibly also in cell cycle regulation and energy metabolism. This is GTPase Era from Rickettsia canadensis (strain McKiel).